Here is a 425-residue protein sequence, read N- to C-terminus: Formyl-CoA:oxalate CoA-transferase (425 aa).

Residues 17-18 (QS), R38, 72-75 (LDTK), 96-98 (NFG), R104, and 136-139 (KVYE) each bind CoA. D168 serves as the catalytic Nucleophile. 247-249 (GGQ) lines the substrate pocket.

The protein belongs to the CoA-transferase III family. Frc subfamily. Homodimer.

The enzyme catalyses formyl-CoA + oxalate = oxalyl-CoA + formate. It participates in metabolic intermediate degradation; oxalate degradation; CO(2) and formate from oxalate: step 1/2. In terms of biological role, involved in the catabolism of oxalate and in the adapatation to low pH via the induction of the oxalate-dependent acid tolerance response (ATR). Catalyzes the transfer of the CoA moiety from formyl-CoA to oxalate. This Rhodopseudomonas palustris (strain TIE-1) protein is Formyl-CoA:oxalate CoA-transferase.